A 384-amino-acid chain; its full sequence is MSRELQDVDLAEVKPLVEKGETITGLLQEFDVQEQDIETLHGSIHVTLCGTPKGNRPVILTYHDIGMNHKTCYNPLFNSEDMQEITQHFAVCHVDAPGQQDGAASFPTGYMYPSMDQLAEMLPGVLQQFGLKSIIGMGTGAGAYILTRFALNNPEMVEGLVLINVNPCAEGWMDWAASKISGWTQALPDMVVSHLFGKEEMQNNVEVVHAYRHHVMNDMNPGNLQLFINAYNGRRDLEIERPMPGAHTVTLQCPALLVVGDSSPAVDAVVECNSKLDPTKTTLLKMADCGGLPQISQPAKLAEAFKYFVQGMGYMPSASMTRLMRSRTASGSSVTSLEGARSRSHTSEGTRSRSHTSEGTRLDIIPNSGGPGSSAGPNSTEVSC.

An N-acetylserine modification is found at S2. A phosphoserine mark is found at S2, S319, and S326. Residues R325 to C384 form a disordered region. The span at R327–S336 shows a compositional bias: polar residues. T328 is subject to Phosphothreonine; by SGK1. Phosphoserine; by SGK1 is present on residues S330 and S332. S333 bears the Phosphoserine mark. Residue T335 is modified to Phosphothreonine. A phosphoserine mark is found at S336 and S342. Tandem repeats lie at residues G339 to E348 and G349 to E358. Positions G339–E358 are 2 X 10 AA tandem repeats of G-[PST]-R-S-R-S-H-T-S-E. Positions H345–R361 are enriched in basic and acidic residues. T346 carries the phosphothreonine; by SGK1 modification. At S352 the chain carries Phosphoserine. T356 is subject to Phosphothreonine; by SGK1. The segment covering S374–C384 has biased composition (low complexity).

This sequence belongs to the NDRG family. Interacts with RAB4A (membrane-bound form); the interaction involves NDRG1 in vesicular recycling of CDH1. Interacts with APOA1, APOA2, PRA1 and RTN1. Post-translationally, under stress conditions, phosphorylated in the C-terminal on many serine and threonine residues. Phosphorylated in vitro by PKA. Phosphorylation enhanced by increased intracellular cAMP levels. Homocysteine induces dephosphorylation. Phosphorylation by SGK1 is cell cycle dependent.

It localises to the cytoplasm. The protein resides in the cytosol. Its subcellular location is the cytoskeleton. It is found in the microtubule organizing center. The protein localises to the centrosome. It localises to the nucleus. The protein resides in the cell membrane. Functionally, stress-responsive protein involved in hormone responses, cell growth, and differentiation. Acts as a tumor suppressor in many cell types. Necessary but not sufficient for p53/TP53-mediated caspase activation and apoptosis. Has a role in cell trafficking notably of the Schwann cell and is necessary for the maintenance and development of the peripheral nerve myelin sheath. Required for vesicular recycling of CDH1 and TF. May also function in lipid trafficking. Protects cells from spindle disruption damage. Functions in p53/TP53-dependent mitotic spindle checkpoint. Regulates microtubule dynamics and maintains euploidy. The sequence is that of Protein NDRG1 (NDRG1) from Bos taurus (Bovine).